Consider the following 518-residue polypeptide: Nicotine N-demethylase CYP82E3 (518 aa).

Residues 2–22 (VFPVEAIVGLVTFTFLFYFLW) traverse the membrane as a helical segment. Residue lysine 254 forms a Glycyl lysine isopeptide (Lys-Gly) (interchain with G-Cter in ubiquitin) linkage. Cysteine 458 is a binding site for heme.

It belongs to the cytochrome P450 family. CYP82E2 subfamily. The cofactor is heme. In terms of tissue distribution, expressed in leaves.

The protein resides in the membrane. The enzyme catalyses (S)-nicotine + reduced [NADPH--hemoprotein reductase] + O2 = (S)-nornicotine + formaldehyde + oxidized [NADPH--hemoprotein reductase] + H2O + H(+). It participates in alkaloid biosynthesis; nicotine biosynthesis. Its function is as follows. Involved in the biosynthesis of pyridine alkaloid natural products, leading mainly to the production of anabasine, anatabine, nicotine and nornicotine, effective deterrents against herbivores with antiparasitic and pesticide properties (neurotoxins); nornicotine serves as the precursor in the synthesis of the carcinogen compound N'-nitrosonornicotine (NNN). Catalyzes the demethylation of nicotine to form nornicotine. This is Nicotine N-demethylase CYP82E3 from Nicotiana tomentosiformis (Tobacco).